Here is a 476-residue protein sequence, read N- to C-terminus: Glycogen synthase (476 aa).

ADP-alpha-D-glucose is bound at residue K15.

This sequence belongs to the glycosyltransferase 1 family. Bacterial/plant glycogen synthase subfamily.

It carries out the reaction [(1-&gt;4)-alpha-D-glucosyl](n) + ADP-alpha-D-glucose = [(1-&gt;4)-alpha-D-glucosyl](n+1) + ADP + H(+). It participates in glycan biosynthesis; glycogen biosynthesis. Synthesizes alpha-1,4-glucan chains using ADP-glucose. The protein is Glycogen synthase of Yersinia pseudotuberculosis serotype O:1b (strain IP 31758).